The chain runs to 316 residues: Melanocyte-stimulating hormone receptor (316 aa).

Residues 1-37 (MPMQGAHRKLLGSLNSTPTATSNLGLAANHTGAPCLE) lie on the Extracellular side of the membrane. N29 is a glycosylation site (N-linked (GlcNAc...) asparagine). The chain crosses the membrane as a helical span at residues 38–63 (VSIPDGLFLSLGLVSLVENVLVVAAI). Topologically, residues 64-72 (AKNRNLHSS) are cytoplasmic. Residues 73–93 (MYCFICCLALSDLLVSGSNML) traverse the membrane as a helical segment. Topologically, residues 94 to 118 (ETAVILLLEAGALATRTSVVQQLHN) are extracellular. Residues 119-140 (TIDVLTCSSMLCSLCFLGAIAV) form a helical membrane-spanning segment. At 141–163 (DRYISIFYALRYHSIMTLPRAQR) the chain is on the cytoplasmic side. Residues 164–183 (AIAAIWVASVLSSTLFITYY) traverse the membrane as a helical segment. The Extracellular portion of the chain corresponds to 184 to 191 (DHAAVLLC). The chain crosses the membrane as a helical span at residues 192–211 (LVVFFLAMLVLMAVLYVHML). Over 212–240 (ARACQHAHGIIRLHKRQSPAHQGFGLRGA) the chain is Cytoplasmic. Residues 241-266 (ATLTILLGIFFLCWGPFFLHLTLVVF) traverse the membrane as a helical segment. Residues 267–279 (CPQHLTCSCIFKN) lie on the Extracellular side of the membrane. Residues 280–300 (FKVFLTLIICNTIIDPLIYAF) traverse the membrane as a helical segment. Topologically, residues 301–316 (RSQELRRTLKEVLCSW) are cytoplasmic. C314 carries the S-palmitoyl cysteine lipid modification.

It belongs to the G-protein coupled receptor 1 family. Interacts with MGRN1, but does not undergo MGRN1-mediated ubiquitination; this interaction competes with GNAS-binding and thus inhibits agonist-induced cAMP production. Interacts with OPN3; the interaction results in a decrease in MC1R-mediated cAMP signaling and ultimately a decrease in melanin production in melanocytes.

The protein localises to the cell membrane. Receptor for MSH (alpha, beta and gamma) and ACTH. The activity of this receptor is mediated by G proteins which activate adenylate cyclase. Mediates melanogenesis, the production of eumelanin (black/brown) and phaeomelanin (red/yellow), via regulation of cAMP signaling in melanocytes. This chain is Melanocyte-stimulating hormone receptor (MC1R), found in Leontocebus fuscicollis (Brown-mantled tamarin).